The chain runs to 496 residues: Sugar transporter ERD6 (496 aa).

6 consecutive transmembrane segments (helical) span residues 58-78, 94-114, 128-148, 156-176, 183-203, and 211-231; these read VFLS…GVGF, VAEY…GAVF, MLFC…AQNA, LLLG…IAEI, GSFV…FFII, and LLTV…FFIP. The residue at position 256 (Ser256) is a Phosphoserine. 6 helical membrane-spanning segments follow: residues 292–312, 329–349, 364–384, 394–414, 430–450, and 456–476; these read YPLI…SSGV, IGTS…TVLV, AMGL…FGIL, IGVL…PWII, LVTV…NFML, and GMFL…YFLV.

It belongs to the major facilitator superfamily. Sugar transporter (TC 2.A.1.1) family. In terms of tissue distribution, expressed in both shoots and roots. In roots, expressed in epidermal cells and especially strongly in cortex cells. In flowers, expressed in sepals.

The protein resides in the membrane. In terms of biological role, sugar transporter. The protein is Sugar transporter ERD6 (ERD6) of Arabidopsis thaliana (Mouse-ear cress).